A 926-amino-acid polypeptide reads, in one-letter code: Vacuolar protein sorting-associated protein 39 homolog (926 aa).

In terms of domain architecture, CNH spans 15-306 (PVEVTCLAFQ…MTLCSGARGQ (292 aa)). The CHCR repeat unit spans residues 590–768 (DETEMARNLN…LFRTLVHPNQ (179 aa)).

Belongs to the VAM6/VPS39 family. In terms of assembly, probable core component of the homotypic fusion and vacuole protein sorting (HOPS) complex consisting of the core class C Vps proteins vps-11, vps-16, vps-18, and which further associates with vps-33.1, vps-39 and vps-41. May interact with lgg-2. Interacts with cuti-1.

Its subcellular location is the cytoplasm. It is found in the lysosome membrane. The protein localises to the late endosome membrane. It localises to the late endosome. The protein resides in the lysosome. In terms of biological role, plays a role in vesicle-mediated protein trafficking to lysosomal compartments including the endocytic membrane transport and autophagic pathways. Believed to act in part as a component of the putative HOPS endosomal tethering complex which is proposed to be involved in the rab-5-to-rab-7 endosome conversion probably implicating sand-1, and via binding SNAREs and SNARE complexes to mediate tethering and docking events during SNARE-mediated membrane fusion. The HOPS complex is proposed to be recruited to rab-7 on the late endosomal membrane and to regulate late endocytic, phagocytic and autophagic traffic towards lysosomes. Involved in homotypic vesicle fusions between late endosomes and in heterotypic fusions between late endosomes and lysosomes. Required for fusion of endosomes. In association with lgg-2 mediates the tethering of autophagosomes with lysosomes to form autolysosomes. Within the HOPS complex, contributes to the normal development of gut granules in embryonic and adult intestinal cells. The chain is Vacuolar protein sorting-associated protein 39 homolog from Caenorhabditis elegans.